The primary structure comprises 853 residues: Deubiquitinase otu (853 aa).

Residues 1–20 (MDMQVQRPITSGSRQAPDPY) are disordered. Positions 29 to 150 (LYRKHTARDA…ENHFDSVYDV (122 aa)) constitute an OTU domain. Asp37 is a catalytic residue. The Nucleophile role is filled by Ser40. Residue His143 is part of the active site. The 61-residue stretch at 336 to 396 (NFKVGAKCKV…HPLPPDEYRP (61 aa)) folds into the Tudor domain. An LC domain region spans residues 396 to 853 (PWSLPFRYHR…AAVYAATRHH (458 aa)). Residues 460–470 (QDDEQRDHNDP) show a composition bias toward basic and acidic residues. 4 disordered regions span residues 460–531 (QDDE…YVPM), 681–704 (AVESTPPPSPEVANATEQSPLEKS), 732–794 (GPAA…AAQG), and 817–853 (NMDPSAQPQQQQPATLQPAPLSVQSQPAAVYAATRHH). Over residues 499-517 (SRVQPQNSSSSQNQEVSGS) the composition is skewed to low complexity. The span at 747 to 758 (NGSQFSFYTTPS) shows a compositional bias: polar residues. Over residues 769–778 (LLQPPPPPPI) the composition is skewed to pro residues. 2 stretches are compositionally biased toward low complexity: residues 783-794 (AGPPQLGGAAQG) and 820-838 (PSAQPQQQQPATLQPAPLS).

As to quaternary structure, self aggregates, forming amyloid-like fibrillar helical structures; protein aggregation is mediated by the C-terminal LC domain, is enhanced by RNA binding and is essential for deubiquitinase activity. Interacts (via OTU domain) with bam (via C-terminus); the interaction enhances otu aggregation and deubiquitinase activity. Together with bam interacts with CycA/cyclin-A; the interaction stabilizes CycA by promoting its deubiquitination. Together with bam interacts with Traf6. Interacts with Hrb27C; the interaction is RNA-independent. Associates (via N-terminus) with mRNP complexes; the interaction is weak. Expressed at high levels in the ovary, at low levels in the brain and fat body, and at moderate levels in the gut.

The protein resides in the cytoplasm. It is found in the cell cortex. It localises to the perinuclear region. With respect to regulation, activated by protein aggregation, which is mediated by the LC domain and enhanced by RNA binding. Functionally, catalytic component of a deubiquitinase complex consisting of bam and otu. The complex deubiquitinates K63-linked polyubiquitinated proteins; this antagonizes the ubiquitination activity of Traf6 and regulates the IMD immune signaling pathway. Otu-bam deubiquitinase activity is regulated by Traf6 dependent immune signaling regulation of bam expression levels; this forms a feedback loop that regulates the IMD immune signaling pathway and balances gut immune activity during aging. The complex deubiquitinates and stabilizes CycA/cyclin-A to regulate CycA-dependent differentiation. Involved in grk mRNA localization to the dorsal anterior region of the oocyte required for dorsal-ventral axis determination; may function as a ribonuclear protein complex together with sqd and Hrb27C. May regulate actin cytoskeleton organization in differentiating cystocytes during fusome maturation; required for efficient nurse cell cytoplasmic dumping during oogenesis. Essential for female fertility; involved in germ cell proliferation and germ cell differentiation. In terms of biological role, involved in the early stages of germ cell proliferation and differentiation during oogenesis. Required for polytene chromosome dispersal in nurse cells during oogenesis. Involved in the later stages of germ cell proliferation and differentiation during oogenesis. This Drosophila melanogaster (Fruit fly) protein is Deubiquitinase otu.